Consider the following 942-residue polypeptide: Homeobox transcription factor phx1 (942 aa).

Polar residues-rich tracts occupy residues 1 to 19 (MRSYSNPENGGQINDNINY), 61 to 73 (HLQGEQQNPTNPN), 99 to 116 (ADNNSFDNVNSSKLTNPS), and 122 to 135 (IVKSESEPANSKQN). Disordered stretches follow at residues 1 to 54 (MRSY…MQLP), 61 to 80 (HLQGEQQNPTNPNYFPPEFD), 87 to 172 (KQEK…KKQR), 604 to 651 (WANQ…STST), and 892 to 922 (SSSGGVYASQPGASGYLSHDQSGSPFEDVYS). Over residues 142 to 151 (SVEKAKENVA) the composition is skewed to basic and acidic residues. Low complexity predominate over residues 153 to 164 (ESGTPESGGSTS). Residues 164–224 (SAPKSKKQRL…QNRRAKSKLI (61 aa)) constitute a DNA-binding region (homeobox). Composition is skewed to polar residues over residues 604 to 614 (WANQLPRQPDS) and 630 to 641 (SHDTSSEYGNKS).

Its subcellular location is the nucleus. Functionally, trnascription factor that regulates the expression of the homocitrate synthase (HCS) lys4. The protein is Homeobox transcription factor phx1 (phx1) of Schizosaccharomyces pombe (strain 972 / ATCC 24843) (Fission yeast).